We begin with the raw amino-acid sequence, 94 residues long: Large ribosomal subunit protein uL23 (94 aa).

This sequence belongs to the universal ribosomal protein uL23 family. Part of the 50S ribosomal subunit. Contacts protein L29, and trigger factor when it is bound to the ribosome.

Functionally, one of the early assembly proteins it binds 23S rRNA. One of the proteins that surrounds the polypeptide exit tunnel on the outside of the ribosome. Forms the main docking site for trigger factor binding to the ribosome. This is Large ribosomal subunit protein uL23 from Trichlorobacter lovleyi (strain ATCC BAA-1151 / DSM 17278 / SZ) (Geobacter lovleyi).